The primary structure comprises 61 residues: uncharacterized protein (61 aa).

It belongs to the DUP/COS family.

This is an uncharacterized protein from Saccharomyces cerevisiae (strain ATCC 204508 / S288c) (Baker's yeast).